A 122-amino-acid polypeptide reads, in one-letter code: LYR motif-containing protein 1 (122 aa).

This sequence belongs to the complex I LYR family. High levels in adipose tissue.

The protein localises to the nucleus. May promote cell proliferation and inhibition of apoptosis of preadipocytes. This chain is LYR motif-containing protein 1 (LYRM1), found in Homo sapiens (Human).